The sequence spans 4367 residues: Guanylate cyclase (4367 aa).

Over residues 1–10 (MKKTRTTAAE) the composition is skewed to polar residues. The disordered stretch occupies residues 1–70 (MKKTRTTAAE…MSFLQGKHQQ (70 aa)). Over 1–150 (MKKTRTTAAE…FKNLWEQFHR (150 aa)) the chain is Cytoplasmic. Positions 19 to 33 (PHDEHRGRGREHGGA) are enriched in basic and acidic residues. The segment covering 54–63 (HQATQKQMSF) has biased composition (polar residues). Residues 151–171 (VINWWFLVMAIIQAIPQLHYN) traverse the membrane as a helical segment. The Extracellular segment spans residues 172-174 (PNH). Residues 175 to 195 (AWSTALPFAIVLVFGMLKDAF) form a helical membrane-spanning segment. At 196-373 (TDLGRRERDR…GFKRPHIEKD (178 aa)) the chain is on the cytoplasmic side. The helical transmembrane segment at 374–394 (INTYLFISFFIVFLTILISVM) threads the bilayer. At 395–452 (SKWSVQERDSGDTGVTDAGASSGSGSSSGETSQTYGSSVEFMLGSRDLLQNPWMSILR) the chain is on the extracellular side. The interval 402–426 (RDSGDTGVTDAGASSGSGSSSGETS) is disordered. Residues 407-426 (TGVTDAGASSGSGSSSGETS) show a composition bias toward low complexity. The chain crosses the membrane as a helical span at residues 453 to 473 (FLAVYAPVLPLSLPLILDVVY). The Cytoplasmic portion of the chain corresponds to 474–2258 (LLQSVLIEGD…VHGRLSLMRV (1785 aa)). 10 disordered regions span residues 486 to 535 (IRGG…QQPL), 550 to 699 (SEKF…ISGR), 831 to 918 (ETSA…ASSL), 932 to 966 (RLEE…PQLA), 980 to 1047 (VGIQ…GELS), 1079 to 1164 (GMSF…MPAV), 1344 to 1593 (PSGT…SLKS), 1607 to 1652 (FRRG…TGTG), 1773 to 1861 (GGRG…GLRS), and 1881 to 1946 (DKQH…PQHL). Residues 523 to 535 (AHSSQNASLQQPL) show a composition bias toward polar residues. Composition is skewed to basic and acidic residues over residues 605–628 (ETLR…REQL) and 670–679 (RRSDDRDRKS). A compositionally biased stretch (low complexity) spans 850–863 (SAASSRSQSAPASA). The span at 880–892 (QTLTNQQTGQQSP) shows a compositional bias: polar residues. The span at 906–917 (ASPGAADSPASS) shows a compositional bias: low complexity. The span at 932–948 (RLEETGSQKEEDSRSDR) shows a compositional bias: basic and acidic residues. The span at 983–996 (QSQHSSQSLLSSRQ) shows a compositional bias: low complexity. A compositionally biased stretch (basic and acidic residues) spans 1025 to 1047 (DRMYSRDYHRESRSSSPRDGELS). Polar residues-rich tracts occupy residues 1084 to 1094 (SRPSSQFTFSS) and 1117 to 1130 (RSLT…TASP). Over residues 1344–1357 (PSGTSASSGAPSGP) the composition is skewed to low complexity. Gly residues-rich tracts occupy residues 1370-1381 (QGQGHGSLGAPG) and 1389-1400 (CLGGAGGSGARG). The segment covering 1443-1454 (VPSPRPLSPAGP) has biased composition (pro residues). Positions 1527-1542 (SFKEKHEEFAFSKDED) are enriched in basic and acidic residues. Positions 1543–1567 (TATVDQDDTQSATDEEHDVEGEEEE) are enriched in acidic residues. The segment covering 1583–1593 (SASASLMSLKS) has biased composition (low complexity). Polar residues-rich tracts occupy residues 1628-1652 (GRSS…TGTG), 1779-1791 (VSLS…SSAK), and 1843-1852 (VNPSGQTYSQ). Basic and acidic residues predominate over residues 1881–1922 (DKQHQRGHGPEGDEGSHELEGHDAHTGDSHGGHHRDQAEPRA). Positions 1933-1942 (RLPQKTQNRL) are enriched in polar residues. The helical transmembrane segment at 2259–2279 (STVILWSFFKSLCIGLPTFLF) threads the bilayer. Topologically, residues 2280–2289 (QPQAFWSAVE) are extracellular. The chain crosses the membrane as a helical span at residues 2290 to 2310 (VYDPLLLMIVDFFWTTLPGII). Topologically, residues 2311-2343 (HGYSDQDLPTHLLPSVPVLYTPGRRRLYFNGFR) are cytoplasmic. Residues 2344–2364 (FILWTVEGIIYSFLIFYLLQA) traverse the membrane as a helical segment. Topologically, residues 2365-2376 (TWMDGNTFHDGQ) are extracellular. A helical membrane pass occupies residues 2377 to 2397 (VLGFHSYGILLLFGSLLQSNV). The Cytoplasmic portion of the chain corresponds to 2398–2408 (RIILETSLWTP). Residues 2409–2429 (TFLFTTIVLCTIMFFPTVLLY) form a helical membrane-spanning segment. Topologically, residues 2430–2444 (SVTGWPRRYMELAGR) are extracellular. A helical transmembrane segment spans residues 2445–2465 (VVFAWPMLYFLIPLWVSIGIL). The Cytoplasmic portion of the chain corresponds to 2466 to 2724 (VQLLLQVFTS…LKRLVPWYRV (259 aa)). The chain crosses the membrane as a helical span at residues 2725 to 2745 (IFMLIALYQLLSFLTEYFIDI). Over 2746-2762 (HWNPGETEMEPWMCVPT) the chain is Extracellular. The helical transmembrane segment at 2763 to 2783 (LVVEIGFAAVVVCTFYDFIFL) threads the bilayer. Residues 2784–2785 (DH) are Cytoplasmic-facing. Residues 2786-2806 (FSLILNSIVFLMVSSSIVFYT) form a helical membrane-spanning segment. The Extracellular portion of the chain corresponds to 2807–2823 (ASHVDGTLTSVLFPVFT). A helical membrane pass occupies residues 2824–2844 (FVILRISFLQAVVWNILFLIV). Topologically, residues 2845–2858 (TVARFMLDKKYLPP) are cytoplasmic. A helical membrane pass occupies residues 2859 to 2879 (LNFVHYIPLFIGIDVFVAFVG). Residues 2880–2903 (YRLEYNQRKSFLLDYSVDASRRKQ) are Extracellular-facing. The chain crosses the membrane as a helical span at residues 2904 to 2924 (REILNTMLPSFVVDQMINSEL). At 2925–3693 (NEEGIPTSLK…RTHFYNNKSN (769 aa)) the chain is on the cytoplasmic side. Positions 2942 to 3150 (SVIFCDVYEF…DTVNTASRMK (209 aa)) constitute a Guanylate cyclase 1 domain. Disordered regions lie at residues 3214 to 3245 (DVIS…ASSG), 3359 to 3402 (GQTE…SRFD), 3456 to 3475 (SGDE…EVPL), 3485 to 3508 (QARE…HTPT), 3523 to 3596 (GCAA…ETEK), and 3620 to 3653 (FRRR…VDDE). Residues 3383–3402 (RADRRPAGRREDSRGDSRFD) are compositionally biased toward basic and acidic residues. Basic and acidic residues-rich tracts occupy residues 3485–3499 (QARE…KRSG), 3529–3541 (EEEK…RESE), and 3549–3569 (TESR…DARE). Residues 3626–3637 (AAPSEAASPSSA) show a composition bias toward low complexity. The helical transmembrane segment at 3694 to 3714 (INTIEQALIIFLVTFCVQTLT) threads the bilayer. At 3715–3736 (RLALPRFYVVCSHHTINLHVCT) the chain is on the extracellular side. A helical transmembrane segment spans residues 3737–3757 (GLYWAVRATYTLAAFVLWMLF). At 3758–3772 (HYRNRKEVATCLELR) the chain is on the cytoplasmic side. A helical membrane pass occupies residues 3773 to 3793 (WMVFLLNLLFISASCVFALSN). Over 3794 to 3895 (SWGVCGQQQE…GSDLVTANGR (102 aa)) the chain is Extracellular. Residues 3896–3916 (AYTYWLLSDTIELFFYIVILH) traverse the membrane as a helical segment. The Cytoplasmic portion of the chain corresponds to 3917 to 3921 (HNTGL). A helical membrane pass occupies residues 3922–3942 (LFQNCILVDVLLMTMSLTFII). The Extracellular segment spans residues 3943 to 3950 (TTARETAS). The helical transmembrane segment at 3951 to 3971 (TVSTIATFPCYVFFNLVSAYC) threads the bilayer. The Cytoplasmic portion of the chain corresponds to 3972 to 4367 (KEYIDRLTFY…GSTPGSALGS (396 aa)). Residues 4024 to 4159 (TFLFADICGF…MDVLTGNMME (136 aa)) enclose the Guanylate cyclase 2 domain. 3 residues coordinate Mg(2+): D4029, I4030, and D4073. The disordered stretch occupies residues 4292 to 4367 (ASHGDSGPSD…GSTPGSALGS (76 aa)). Residues 4333–4344 (DGLKQLRKEIER) show a composition bias toward basic and acidic residues. Positions 4356–4367 (DIGSTPGSALGS) are enriched in polar residues.

In the N-terminal section; belongs to the cation transport ATPase (P-type) (TC 3.A.3) family. Type IV subfamily. The protein in the C-terminal section; belongs to the adenylyl cyclase class-4/guanylyl cyclase family. As to quaternary structure, interacts with chaperone CDC50.1; the interaction regulates guanylate cyclase GC trafficking and sensing environmental changes. Interacts with UGO; the interaction regulates guanylate cyclase GC trafficking and catalytic activity. The cofactor is Mg(2+). Mn(2+) is required as a cofactor.

The protein localises to the cell membrane. It catalyses the reaction GTP = 3',5'-cyclic GMP + diphosphate. Functionally, catalyzes the synthesis of the second messenger cGMP from GTP. During the tachyzoite lytic growth cycle in host cells, detects and transduces environmental changes in potassium, phosphatidic acid and pH levels. By producing cGMP in response to these environmental changes, activates PKG and thereby regulates PKG-dependent microneme secretion which is essential for tachyzoite motility, host cell attachment invasion of and egress from host cells. May play a role in the fission of connected tachyzoites at their basal pole during egress. Does not display flippase activity towards phosphatidylserine, phosphatidic acid or phosphatidylcholine. The protein is Guanylate cyclase of Toxoplasma gondii (strain ATCC 50853 / GT1).